Reading from the N-terminus, the 931-residue chain is Isoleucine--tRNA ligase (931 aa).

Positions proline 58–histidine 68 match the 'HIGH' region motif. Residue glutamate 559 participates in L-isoleucyl-5'-AMP binding. The 'KMSKS' region signature appears at lysine 600–serine 604. Lysine 603 contributes to the ATP binding site. Residues cysteine 894, cysteine 897, cysteine 914, and cysteine 917 each coordinate Zn(2+).

This sequence belongs to the class-I aminoacyl-tRNA synthetase family. IleS type 1 subfamily. As to quaternary structure, monomer. Requires Zn(2+) as cofactor.

The protein localises to the cytoplasm. The enzyme catalyses tRNA(Ile) + L-isoleucine + ATP = L-isoleucyl-tRNA(Ile) + AMP + diphosphate. In terms of biological role, catalyzes the attachment of isoleucine to tRNA(Ile). As IleRS can inadvertently accommodate and process structurally similar amino acids such as valine, to avoid such errors it has two additional distinct tRNA(Ile)-dependent editing activities. One activity is designated as 'pretransfer' editing and involves the hydrolysis of activated Val-AMP. The other activity is designated 'posttransfer' editing and involves deacylation of mischarged Val-tRNA(Ile). This is Isoleucine--tRNA ligase from Legionella pneumophila (strain Paris).